Consider the following 629-residue polypeptide: Probable potassium transport system protein Kup 3 (629 aa).

The next 12 helical transmembrane spans lie at 20 to 40 (LSLS…LYTF), 61 to 81 (VSLI…SFAL), 106 to 126 (PFII…GTIT), 143 to 163 (PSLK…LFAI), 171 to 191 (IGKA…ILGA), 212 to 232 (FLFS…LCVT), 253 to 273 (WFGL…ALVL), 291 to 311 (FLLP…QAII), 343 to 363 (IYIG…TIGF), 372 to 392 (AYGI…FIAL), 400 to 420 (IITS…FFAA), and 425 to 445 (FING…MMYI).

Belongs to the HAK/KUP transporter (TC 2.A.72) family.

It localises to the cell inner membrane. It catalyses the reaction K(+)(in) + H(+)(in) = K(+)(out) + H(+)(out). Functionally, transport of potassium into the cell. Likely operates as a K(+):H(+) symporter. The chain is Probable potassium transport system protein Kup 3 from Legionella pneumophila (strain Lens).